The following is a 389-amino-acid chain: Anhydro-N-acetylmuramic acid kinase (389 aa).

ATP is bound at residue 11 to 18; the sequence is GTSLDGVD.

This sequence belongs to the anhydro-N-acetylmuramic acid kinase family.

It carries out the reaction 1,6-anhydro-N-acetyl-beta-muramate + ATP + H2O = N-acetyl-D-muramate 6-phosphate + ADP + H(+). It participates in amino-sugar metabolism; 1,6-anhydro-N-acetylmuramate degradation. It functions in the pathway cell wall biogenesis; peptidoglycan recycling. In terms of biological role, catalyzes the specific phosphorylation of 1,6-anhydro-N-acetylmuramic acid (anhMurNAc) with the simultaneous cleavage of the 1,6-anhydro ring, generating MurNAc-6-P. Is required for the utilization of anhMurNAc either imported from the medium or derived from its own cell wall murein, and thus plays a role in cell wall recycling. The polypeptide is Anhydro-N-acetylmuramic acid kinase (Albidiferax ferrireducens (strain ATCC BAA-621 / DSM 15236 / T118) (Rhodoferax ferrireducens)).